Here is a 1289-residue protein sequence, read N- to C-terminus: uncharacterized protein (1289 aa).

One can recognise an MHD1 domain in the interval 615–733; it reads LDMYDVLKEL…DGMLSYSAQL (119 aa). The interval 745–774 is disordered; sequence DEPSYSLESSDTRSSLSLNNANVNHEKSRS. The span at 748 to 762 shows a compositional bias: low complexity; it reads SYSLESSDTRSSLSL. One can recognise a C2 domain in the interval 834 to 966; the sequence is AQYHSSHNLE…DDGFPIDFSL (133 aa). An MHD2 domain is found at 1044–1184; sequence YDAILPLFDY…KSVSELKDEV (141 aa).

It localises to the cytoplasm. This is an uncharacterized protein from Saccharomyces cerevisiae (strain ATCC 204508 / S288c) (Baker's yeast).